The sequence spans 1163 residues: GTPase-activating protein (1163 aa).

2 C2 domains span residues 26–148 and 261–419; these read PSSN…DHWF and TTST…SAWY. The region spanning 520–737 is the Ras-GAP domain; the sequence is ERIAPIIKAL…DAVKHFLEVI (218 aa). Residues 762-860 enclose the PH domain; that stretch reads LKEGLMTKYP…WFDLLHKICL (99 aa). The segment at 862–898 adopts a Btk-type zinc-finger fold; sequence NSIRMQYFHPSAFVSGFYSCCGRSDENSPGCKKVLDK. The Zn(2+) site is built by His-870, Cys-881, Cys-882, and Cys-892. Disordered regions lie at residues 1026–1051 and 1091–1163; these read LNQQ…LQQF and PFHQ…PPIY. Residues 1091 to 1157 are compositionally biased toward low complexity; it reads PFHQQQQQHH…APPSTTSSSQ (67 aa).

As to quaternary structure, interacts with sty. In terms of tissue distribution, in third instar larvae eye imaginal disk, expressed in cells posterior to the morphogenetic furrow, in all photoreceptor and cone cell precursors as well as in still uncommitted cells.

Its function is as follows. Inhibitory regulator of the Ras-cyclic AMP pathway. May function as a negative regulator of Ras85D/Ras1 in the sev signaling pathway. Acts cell autonomously in cone cell precursors as a negative regulator of R7 photoreceptor cell determination. The polypeptide is GTPase-activating protein (RasGAP1) (Drosophila melanogaster (Fruit fly)).